The primary structure comprises 151 residues: Ribosome maturation factor RimP (151 aa).

It belongs to the RimP family.

The protein resides in the cytoplasm. Required for maturation of 30S ribosomal subunits. This is Ribosome maturation factor RimP from Vibrio atlanticus (strain LGP32) (Vibrio splendidus (strain Mel32)).